Reading from the N-terminus, the 436-residue chain is 3-ketoacyl-CoA thiolase (436 aa).

The Acyl-thioester intermediate role is filled by C99. Active-site proton acceptor residues include H392 and C422.

Belongs to the thiolase-like superfamily. Thiolase family. In terms of assembly, heterotetramer of two alpha chains (FadJ) and two beta chains (FadI).

The protein localises to the cytoplasm. The catalysed reaction is an acyl-CoA + acetyl-CoA = a 3-oxoacyl-CoA + CoA. It participates in lipid metabolism; fatty acid beta-oxidation. Catalyzes the final step of fatty acid oxidation in which acetyl-CoA is released and the CoA ester of a fatty acid two carbons shorter is formed. In Photobacterium profundum (strain SS9), this protein is 3-ketoacyl-CoA thiolase.